The following is a 665-amino-acid chain: Prelamin-A/C (665 aa).

At Met-1 the chain carries N-acetylmethionine. The disordered stretch occupies residues 1 to 25 (METPSQRRATRSGAQASSTPLSPTR). Positions 1-33 (METPSQRRATRSGAQASSTPLSPTRITRLQEKE) are head. The segment at 1–130 (METPSQRRAT…TKKEGDLLAA (130 aa)) is interaction with MLIP. Thr-3 bears the Phosphothreonine mark. At Ser-5 the chain carries Phosphoserine. Thr-10 bears the Phosphothreonine mark. Phosphoserine occurs at positions 12 and 18. Thr-19 carries the phosphothreonine modification. Ser-22 bears the Phosphoserine mark. The 357-residue stretch at 31–387 (EKEDLQELND…KLLEGEEERL (357 aa)) folds into the IF rod domain. Residue Lys-32 is modified to N6-acetyllysine; alternate. Lys-32 carries the post-translational modification N6-succinyllysine; alternate. Lys-32 participates in a covalent cross-link: Glycyl lysine isopeptide (Lys-Gly) (interchain with G-Cter in SUMO2); alternate. A coil 1A region spans residues 34-70 (DLQELNDRLAVYIDRVRSLETENAGLRLRITESEEVV). Phosphoserine occurs at positions 51, 66, and 71. Residues 71–80 (SREVSGIKAA) are linker 1. N6-acetyllysine is present on residues Lys-78 and Lys-97. The interval 81–218 (YEAELGDARK…NIYSEELRET (138 aa)) is coil 1B. A Glycyl lysine isopeptide (Lys-Gly) (interchain with G-Cter in SUMO2) cross-link involves residue Lys-97. Residue Ser-107 is modified to Phosphoserine. N6-acetyllysine occurs at positions 108, 114, 123, 135, 144, and 155. Lys-171 is subject to N6-acetyllysine; alternate. N6-succinyllysine; alternate is present on Lys-171. Lys-171 is covalently cross-linked (Glycyl lysine isopeptide (Lys-Gly) (interchain with G-Cter in SUMO2); alternate). 3 positions are modified to N6-acetyllysine: Lys-180, Lys-201, and Lys-208. Lys-201 is covalently cross-linked (Glycyl lysine isopeptide (Lys-Gly) (interchain with G-Cter in SUMO2); alternate). Lys-201 participates in a covalent cross-link: Glycyl lysine isopeptide (Lys-Gly) (interchain with G-Cter in SUMO); alternate. Residue Lys-208 forms a Glycyl lysine isopeptide (Lys-Gly) (interchain with G-Cter in SUMO2) linkage. Ser-212 bears the Phosphoserine mark. Glycyl lysine isopeptide (Lys-Gly) (interchain with G-Cter in SUMO2) cross-links involve residues Lys-219 and Lys-233. The linker 2 stretch occupies residues 219 to 242 (KRRHETRLVEIDNGKQREFESRLA). N6-acetyllysine occurs at positions 233, 260, 265, and 270. A coil 2 region spans residues 243–383 (DALQELRAQH…HAYRKLLEGE (141 aa)). A Glycyl lysine isopeptide (Lys-Gly) (interchain with G-Cter in SUMO2); alternate cross-link involves residue Lys-260. Lys-270 is covalently cross-linked (Glycyl lysine isopeptide (Lys-Gly) (interchain with G-Cter in SUMO2); alternate). Phosphoserine occurs at positions 277, 282, 301, and 307. Residue Lys-311 forms a Glycyl lysine isopeptide (Lys-Gly) (interchain with G-Cter in SUMO2); alternate linkage. Residues Lys-311, Lys-316, and Lys-341 each carry the N6-acetyllysine modification. Glycyl lysine isopeptide (Lys-Gly) (interchain with G-Cter in SUMO2) cross-links involve residues Lys-366 and Lys-378. Residues 384–442 (EERLRLSPSPTSQRSRGRASSHSSQSQGGGSVTKKRKLESSESRSSFSQHARTSGRVAV) are disordered. The tract at residues 384–665 (EERLRLSPSP…SQSSQNCSIM (282 aa)) is tail. 10 positions are modified to phosphoserine: Ser-390, Ser-392, Ser-395, Ser-398, Ser-403, Ser-404, Ser-406, Ser-407, Ser-409, and Ser-414. Ser-392 carries the phosphoserine; by CDK1 modification. Low complexity predominate over residues 395–409 (SQRSRGRASSHSSQS). The residue at position 416 (Thr-416) is a Phosphothreonine. An N6-acetyllysine mark is found at Lys-417 and Lys-420. Residues Lys-417 and Lys-420 each participate in a glycyl lysine isopeptide (Lys-Gly) (interchain with G-Cter in SUMO2) cross-link. A Nuclear localization signal motif is present at residues 417–422 (KKRKLE). Residues Ser-423, Ser-426, Ser-429, and Ser-431 each carry the phosphoserine modification. One can recognise an LTD domain in the interval 428 to 545 (SSFSQHARTS…EEVAMRKLVR (118 aa)). A Glycyl lysine isopeptide (Lys-Gly) (interchain with G-Cter in SUMO2); alternate cross-link involves residue Lys-450. Lys-450 and Lys-457 each carry N6-acetyllysine. 3 positions are modified to phosphoserine: Ser-458, Glu-460, and Ser-463. Lys-486 bears the N6-acetyllysine mark. A Glycyl lysine isopeptide (Lys-Gly) (interchain with G-Cter in SUMO2) cross-link involves residue Lys-486. Phosphothreonine is present on Thr-496. Ser-500 bears the Phosphoserine mark. Phosphothreonine is present on residues Thr-505 and Thr-510. Residues Ser-533 and Ser-546 each carry the phosphoserine modification. The residue at position 548 (Thr-548) is a Phosphothreonine. Residues 553 to 577 (NEDDDEDGEELLHHHRGSHCSGSGD) form a disordered region. A phosphoserine mark is found at Ser-570, Cys-572, and Ser-573. Lys-599 is covalently cross-linked (Glycyl lysine isopeptide (Lys-Gly) (interchain with G-Cter in SUMO2); alternate). Residue Lys-599 forms a Glycyl lysine isopeptide (Lys-Gly) (interchain with G-Cter in SUMO1); alternate linkage. Ser-613, Ser-614, Ser-617, and Ser-620 each carry phosphoserine. 2 O-linked (GlcNAc) serine glycosylation sites follow: Ser-626 and Ser-629. Residues Ser-629, Ser-633, Ser-637, and Ser-653 each carry the phosphoserine modification. The propeptide at 648-662 (LLGNSSPRSQSSQNC) is removed in Lamin-A/C form. Cys-662 is subject to Cysteine methyl ester. Cys-662 carries the S-farnesyl cysteine lipid modification. Residues 663–665 (SIM) constitute a propeptide, removed in Prelamin-A/C form and in Lamin-A/C form.

The protein belongs to the intermediate filament family. Homodimer of lamin A and lamin C. Lamin dimers then assemble into dimeric head-to-tail polymers. Ultimately, two head-to-tail polymers assemble laterally into a protofilament with a uniformly shaped rod of 3.5 nm in diameter. Interacts with lamin-associated polypeptides IA, IB and TMPO-alpha, RB1 and with emerin. Proteolytically processed isoform A interacts with NARF. Interacts with SREBF1, SREBF2, SUN1, SUN2 and TMEM43. Interacts with TMEM201. Prelamin-A/C interacts with EMD. Interacts with DMPK; may regulate nuclear envelope stability. Interacts with MLIP. Interacts with SUV39H1; the interaction increases stability of SUV39H1. Interacts with ITSN1 isoform 2. Interacts with IFFO1; the interaction forms an interior nucleoskeleton and the recruitment to DNA double-strand breaks. As to quaternary structure, interacts with EMD. In terms of assembly, interacts (via C-terminus) with LEMD2 (via N-terminus) (in vitro). Proteolytic cleavage of the C-terminal of 18 residues of prelamin-A/C results in the production of lamin-A/C. The prelamin-A/C maturation pathway includes farnesylation of CAAX motif by protein farnesyltransferase (FNTA and FNTB), removal of the last three amino acids (-AAX) by RCE1/FACE2 and/or ZMPSTE24, methylation of the C-terminal cysteine by ICMT and endoproteolytic removal of the last 15 C-terminal amino acids by ZMPSTE24. Proteolytic cleavage requires prior farnesylation and methylation, and absence of these blocks cleavage. Post-translationally, farnesylation of prelamin-A/C facilitates nuclear envelope targeting. In terms of processing, phosphorylation plays a key role in lamin organization, subcellular localization and nuclear envelope disintegration. Phosphorylation by CDK1 at Ser-22 and Ser-392 at the onset of mitosis drives lamin disassembly and nuclear envelope breakdown. Phosphorylation at Ser-22 and Ser-392 during interphase promotes localization to the nucleoplasm and regulates lamina assembly. Phosphorylation at Ser-22, Ser-392 and Ser-629 during interphase causes redistribution between the nucleus and the cytoplasm. Phosphorylation at Ser-22 by CDK1 regulates matrix stiffness. Phosphorylation status of Ser-22 determines its localization between double-strand break (DSB) sites and the nuclear matrix. Phosphorylated by ATR at Ser-282 in response to DNA damage, leading to lamin disassembly and nuclear envelope rupture. Phosphorylation also regulates stability in micronuclei arising from genome instability: phosphorylation at Ser-395 by ATR in response to genome instability and double-stranded DNA breaks primes LMNA for subsequent phosphorylation at Ser-392 by CDK1 and micronuclei envelope rupture. The rupture of micronuclear envelope triggers the cGAS-STING pathway thereby activating the type I interferon response and innate immunity. Isoform C is phosphorylated on Ser-392, Ser-407 and Ser-409 at interphase. Post-translationally, acetylation by KAT8 is required for nuclear architecture. In terms of processing, sumoylation is necessary for the localization to the nuclear envelope. The N-terminus is blocked. Expressed in liver and in bone marrow (at protein level). Expressed in cardiomyocytes. In terms of tissue distribution, specifically expressed in germ cells.

The protein resides in the nucleus lamina. The protein localises to the nucleus envelope. Its subcellular location is the nucleus. It is found in the nucleoplasm. It localises to the nucleus matrix. Lamins are intermediate filament proteins that assemble into a filamentous meshwork, and which constitute the major components of the nuclear lamina, a fibrous layer on the nucleoplasmic side of the inner nuclear membrane. Lamins provide a framework for the nuclear envelope, bridging the nuclear envelope and chromatin, thereby playing an important role in nuclear assembly, chromatin organization, nuclear membrane and telomere dynamics. Lamin A and C also regulate matrix stiffness by conferring nuclear mechanical properties. The structural integrity of the lamina is strictly controlled by the cell cycle, as seen by the disintegration and formation of the nuclear envelope in prophase and telophase, respectively. Lamin A and C are present in equal amounts in the lamina of mammals. Also invoved in DNA repair: recruited by DNA repair proteins XRCC4 and IFFO1 to the DNA double-strand breaks (DSBs) to prevent chromosome translocation by immobilizing broken DNA ends. Required for normal development of peripheral nervous system and skeletal muscle and for muscle satellite cell proliferation. Required for osteoblastogenesis and bone formation. Also prevents fat infiltration of muscle and bone marrow, helping to maintain the volume and strength of skeletal muscle and bone. Required for cardiac homeostasis. In terms of biological role, prelamin-A/C can accelerate smooth muscle cell senescence. It acts to disrupt mitosis and induce DNA damage in vascular smooth muscle cells (VSMCs), leading to mitotic failure, genomic instability, and premature senescence. Functionally, isoform C2 may have a role in determining the organization of nuclear and chromosomal structures during spermatogenesis. The protein is Prelamin-A/C (Lmna) of Mus musculus (Mouse).